We begin with the raw amino-acid sequence, 241 residues long: Nickel import ATP-binding protein LarO (241 aa).

An ABC transporter domain is found at 2–240; the sequence is IKLVNICYDY…QPARQAQLMT (239 aa). 34 to 41 serves as a coordination point for ATP; that stretch reads GPNGSGKS.

This sequence belongs to the ABC transporter superfamily. In terms of assembly, may form an energy-coupling factor (ECF) transporter complex composed of an ATP-binding protein (A component, LarO), a transmembrane protein (T component, LarQ) and a fused possible substrate-capture protein (S component, LarMN) of unknown stoichiometry.

The protein localises to the cell membrane. Its function is as follows. Probable ATP-binding component of the energy-coupling factor (ECF) transporter complex LarMNQO involved in nickel import. LarO is presumably responsible for energy coupling to the transport system. The chain is Nickel import ATP-binding protein LarO from Lactiplantibacillus plantarum (strain ATCC BAA-793 / NCIMB 8826 / WCFS1) (Lactobacillus plantarum).